The primary structure comprises 344 residues: Anthranilate phosphoribosyltransferase (344 aa).

5-phospho-alpha-D-ribose 1-diphosphate contacts are provided by residues G84, G87 to D88, T92, N94 to T97, K112 to S120, and S124. G84 provides a ligand contact to anthranilate. Residue S96 coordinates Mg(2+). R170 provides a ligand contact to anthranilate. Residues D229 and E230 each contribute to the Mg(2+) site.

It belongs to the anthranilate phosphoribosyltransferase family. In terms of assembly, homodimer. The cofactor is Mg(2+).

The enzyme catalyses N-(5-phospho-beta-D-ribosyl)anthranilate + diphosphate = 5-phospho-alpha-D-ribose 1-diphosphate + anthranilate. It functions in the pathway amino-acid biosynthesis; L-tryptophan biosynthesis; L-tryptophan from chorismate: step 2/5. Its function is as follows. Catalyzes the transfer of the phosphoribosyl group of 5-phosphorylribose-1-pyrophosphate (PRPP) to anthranilate to yield N-(5'-phosphoribosyl)-anthranilate (PRA). The protein is Anthranilate phosphoribosyltransferase of Janthinobacterium sp. (strain Marseille) (Minibacterium massiliensis).